A 453-amino-acid polypeptide reads, in one-letter code: Ribulose bisphosphate carboxylase large chain (453 aa).

Residues 1–2 (MS) constitute a propeptide that is removed on maturation. Pro3 bears the N-acetylproline mark. Lys14 bears the N6,N6,N6-trimethyllysine mark. Substrate contacts are provided by Asn123 and Thr173. Lys175 functions as the Proton acceptor in the catalytic mechanism. Lys177 is a binding site for substrate. Positions 201, 203, and 204 each coordinate Mg(2+). Residue Lys201 is modified to N6-carboxylysine. His294 acts as the Proton acceptor in catalysis. Residues Arg295, His327, and Ser379 each contribute to the substrate site.

Belongs to the RuBisCO large chain family. Type I subfamily. As to quaternary structure, heterohexadecamer of 8 large chains and 8 small chains; disulfide-linked. The disulfide link is formed within the large subunit homodimers. The cofactor is Mg(2+). The disulfide bond which can form in the large chain dimeric partners within the hexadecamer appears to be associated with oxidative stress and protein turnover.

The protein resides in the plastid. It is found in the chloroplast. It catalyses the reaction 2 (2R)-3-phosphoglycerate + 2 H(+) = D-ribulose 1,5-bisphosphate + CO2 + H2O. It carries out the reaction D-ribulose 1,5-bisphosphate + O2 = 2-phosphoglycolate + (2R)-3-phosphoglycerate + 2 H(+). Functionally, ruBisCO catalyzes two reactions: the carboxylation of D-ribulose 1,5-bisphosphate, the primary event in carbon dioxide fixation, as well as the oxidative fragmentation of the pentose substrate in the photorespiration process. Both reactions occur simultaneously and in competition at the same active site. This Galium corsicum protein is Ribulose bisphosphate carboxylase large chain.